A 620-amino-acid polypeptide reads, in one-letter code: Chaperone protein HtpG (620 aa).

Residues 1–334 form an a; substrate-binding region; that stretch reads MTTTDTAPQT…SEDLPLNLSR (334 aa). The interval 335–548 is b; sequence EMLQNNPQLV…GQGPDRALER (214 aa). Residues 549 to 620 form a c region; the sequence is MLAQQNRGGA…RINRLVLRAL (72 aa).

This sequence belongs to the heat shock protein 90 family. Homodimer.

Its subcellular location is the cytoplasm. Molecular chaperone. Has ATPase activity. The sequence is that of Chaperone protein HtpG from Rhodopseudomonas palustris (strain BisA53).